A 554-amino-acid chain; its full sequence is Oxygen-dependent choline dehydrogenase (554 aa).

4-33 serves as a coordination point for FAD; that stretch reads DYIIIGAGSAGNVLATRLTEDPNTTVLLLE. The Proton acceptor role is filled by His473.

The protein belongs to the GMC oxidoreductase family. It depends on FAD as a cofactor.

It catalyses the reaction choline + A = betaine aldehyde + AH2. The catalysed reaction is betaine aldehyde + NAD(+) + H2O = glycine betaine + NADH + 2 H(+). The protein operates within amine and polyamine biosynthesis; betaine biosynthesis via choline pathway; betaine aldehyde from choline (cytochrome c reductase route): step 1/1. Functionally, involved in the biosynthesis of the osmoprotectant glycine betaine. Catalyzes the oxidation of choline to betaine aldehyde and betaine aldehyde to glycine betaine at the same rate. This chain is Oxygen-dependent choline dehydrogenase, found in Klebsiella pneumoniae (strain 342).